Reading from the N-terminus, the 309-residue chain is tRNA pseudouridine synthase B (309 aa).

The Nucleophile role is filled by D40.

It belongs to the pseudouridine synthase TruB family. Type 1 subfamily.

The enzyme catalyses uridine(55) in tRNA = pseudouridine(55) in tRNA. Functionally, responsible for synthesis of pseudouridine from uracil-55 in the psi GC loop of transfer RNAs. The polypeptide is tRNA pseudouridine synthase B (Mycobacterium avium (strain 104)).